The primary structure comprises 447 residues: tRNA threonylcarbamoyladenosine dehydratase 2 (447 aa).

A run of 3 helical transmembrane segments spans residues 9 to 29 (LITA…YAWT), 86 to 106 (NQYV…NSLV), and 294 to 314 (ILPV…TWIL).

It belongs to the HesA/MoeB/ThiF family.

The protein localises to the mitochondrion outer membrane. In terms of biological role, catalyzes the ATP-dependent dehydration of threonylcarbamoyladenosine at position 37 (t(6)A37) to form cyclic t(6)A37 (ct(6)A37) in tRNAs that read codons beginning with adenine. The sequence is that of tRNA threonylcarbamoyladenosine dehydratase 2 (TCD2) from Saccharomyces cerevisiae (strain ATCC 204508 / S288c) (Baker's yeast).